Here is a 104-residue protein sequence, read N- to C-terminus: Large ribosomal subunit protein bL21 (104 aa).

Belongs to the bacterial ribosomal protein bL21 family. Part of the 50S ribosomal subunit. Contacts protein L20.

Functionally, this protein binds to 23S rRNA in the presence of protein L20. This chain is Large ribosomal subunit protein bL21, found in Clostridium botulinum (strain 657 / Type Ba4).